Reading from the N-terminus, the 213-residue chain is Cytochrome c biogenesis ATP-binding export protein CcmA (213 aa).

In terms of domain architecture, ABC transporter spans 8–213 (LQATALTCER…RDIDLGQWAA (206 aa)). 40–47 (GPNGSGKT) is a binding site for ATP.

It belongs to the ABC transporter superfamily. CcmA exporter (TC 3.A.1.107) family. In terms of assembly, the complex is composed of two ATP-binding proteins (CcmA) and two transmembrane proteins (CcmB).

It localises to the cell inner membrane. The enzyme catalyses heme b(in) + ATP + H2O = heme b(out) + ADP + phosphate + H(+). Functionally, part of the ABC transporter complex CcmAB involved in the biogenesis of c-type cytochromes; once thought to export heme, this seems not to be the case, but its exact role is uncertain. Responsible for energy coupling to the transport system. The chain is Cytochrome c biogenesis ATP-binding export protein CcmA from Pseudomonas savastanoi pv. phaseolicola (strain 1448A / Race 6) (Pseudomonas syringae pv. phaseolicola (strain 1448A / Race 6)).